We begin with the raw amino-acid sequence, 119 residues long: Large ribosomal subunit protein uL18 (119 aa).

The protein belongs to the universal ribosomal protein uL18 family. Part of the 50S ribosomal subunit; part of the 5S rRNA/L5/L18/L25 subcomplex. Contacts the 5S and 23S rRNAs.

Its function is as follows. This is one of the proteins that bind and probably mediate the attachment of the 5S RNA into the large ribosomal subunit, where it forms part of the central protuberance. The protein is Large ribosomal subunit protein uL18 of Borreliella afzelii (strain PKo) (Borrelia afzelii).